A 302-amino-acid chain; its full sequence is uncharacterized protein (302 aa).

Disordered regions lie at residues 81–100 (ETSD…ERAA), 155–209 (TVTG…PVNP), and 269–302 (LRIE…ALLN). Over residues 196 to 209 (PSLPSSLVSSPVNP) the composition is skewed to low complexity.

This is an uncharacterized protein from Ictalurid herpesvirus 1 (strain Auburn) (IcHV-1).